A 280-amino-acid polypeptide reads, in one-letter code: MKTNYEIRYAAHPEDARSYDTKRIRRDFLIEKVFSADEVNMVYSMYDRMVVGGAMPVKEVLKLEAIDPLKAPYFLTRREMGIFNVGGPGVVRAGDTIFQLDYKEALYLGAGDRDVTFESTDAAHPAKFYFNSLAAHRNYPDKKVTKADAVVAEMGTLEGSNHRNINKMLVNQVLPTCQLQMGMTELAPGSVWNTMPAHVHSRRMEAYFYFEVPEEHAVCHFMGEVDETRHVWMKGDQAVLSPEWSIHSAAATHNYTFIWGMGGENLDYGDQDFSLITDLK.

Histidine 198, histidine 200, glutamate 205, and histidine 247 together coordinate Zn(2+).

The protein belongs to the KduI family. The cofactor is Zn(2+).

The catalysed reaction is 5-dehydro-4-deoxy-D-glucuronate = 3-deoxy-D-glycero-2,5-hexodiulosonate. It functions in the pathway glycan metabolism; pectin degradation; 2-dehydro-3-deoxy-D-gluconate from pectin: step 4/5. Catalyzes the isomerization of 5-dehydro-4-deoxy-D-glucuronate to 3-deoxy-D-glycero-2,5-hexodiulosonate. The polypeptide is 4-deoxy-L-threo-5-hexosulose-uronate ketol-isomerase (Bacteroides fragilis (strain YCH46)).